We begin with the raw amino-acid sequence, 416 residues long: Lipid III flippase (416 aa).

Residues M1 to K17 are Cytoplasmic-facing. The chain crosses the membrane as a helical span at residues I18 to G38. Residues L39 to Q45 are Periplasmic-facing. Residues L46–V66 form a helical membrane-spanning segment. Topologically, residues A67–S84 are cytoplasmic. A helical membrane pass occupies residues A85–I105. At S106–L121 the chain is on the periplasmic side. A helical membrane pass occupies residues V122–F142. Residues R143–D144 lie on the Cytoplasmic side of the membrane. Residues A145–V165 form a helical membrane-spanning segment. Residues S166–G174 are Periplasmic-facing. A helical transmembrane segment spans residues A175–I195. Topologically, residues K196–Q216 are cytoplasmic. A helical transmembrane segment spans residues L217–M237. The Periplasmic portion of the chain corresponds to M238–S259. Residues I260–L280 traverse the membrane as a helical segment. Topologically, residues S281 to P302 are cytoplasmic. Residues A303–L323 traverse the membrane as a helical segment. Residues S324–F334 lie on the Periplasmic side of the membrane. A helical membrane pass occupies residues A335–I355. Over A356–Q370 the chain is Cytoplasmic. A run of 2 helical transmembrane segments spans residues F371–A391 and Q392–W412. The Cytoplasmic portion of the chain corresponds to R413–A416.

The protein belongs to the polysaccharide transport (PST) (TC 2.A.66.2) family. Probably part of a complex composed of WzxE, WzyE and WzzE.

Its subcellular location is the cell inner membrane. It participates in bacterial outer membrane biogenesis; enterobacterial common antigen biosynthesis. Its function is as follows. Mediates the transbilayer movement of Und-PP-GlcNAc-ManNAcA-Fuc4NAc (lipid III) from the inner to the outer leaflet of the cytoplasmic membrane during the assembly of enterobacterial common antigen (ECA). Required for the assembly of the phosphoglyceride-linked form of ECA (ECA(PG)) and the water-soluble cyclic form of ECA (ECA(CYC)). Could also mediate the translocation of Und-PP-GlcNAc. The chain is Lipid III flippase from Escherichia coli (strain K12).